The chain runs to 1406 residues: Carboxypeptidase D (1406 aa).

Residues 1-25 (MPTLGLLFASIGIAVLAMGVPHCRG) form the signal peptide. Residues 26 to 1312 (YTIKEDESFL…VNEHVFGLPR (1287 aa)) are Extracellular-facing. Peptidase M14 domains lie at 39–335 (HYAS…LRQA) and 455–760 (EHHN…IEQV). Positions 101 and 104 each coordinate Zn(2+). The N-linked (GlcNAc...) asparagine glycan is linked to asparagine 133. Intrachain disulfides connect cysteine 156–cysteine 309, cysteine 236–cysteine 237, and cysteine 268–cysteine 308. Residue histidine 217 coordinates Zn(2+). An N-linked (GlcNAc...) asparagine glycan is attached at asparagine 269. Residue glutamate 305 is the Proton donor/acceptor of the active site. Asparagine 458 carries an N-linked (GlcNAc...) asparagine glycan. Zn(2+) is bound by residues histidine 517 and glutamate 520. N-linked (GlcNAc...) asparagine glycosylation is found at asparagine 549 and asparagine 612. Histidine 626 contacts Zn(2+). A glycan (N-linked (GlcNAc...) asparagine) is linked at asparagine 652. The active-site Proton donor/acceptor is the glutamate 730. 5 N-linked (GlcNAc...) asparagine glycosylation sites follow: asparagine 787, asparagine 808, asparagine 981, asparagine 1152, and asparagine 1251. Residues 863–1121 (RYHTNPQVRA…DKIKNFLALV (259 aa)) form the Peptidase M14 3 domain. A helical transmembrane segment spans residues 1313–1333 (FLFILCASVLIIVGVIVCVLC). The Cytoplasmic segment spans residues 1334–1406 (AQFWFYRRHR…TNYSFIIQAA (73 aa)). The Cell attachment site motif lies at 1343–1345 (RGD). Serine 1380 carries the post-translational modification Phosphoserine.

The protein belongs to the peptidase M14 family. Monomer. Zn(2+) is required as a cofactor. As to expression, expressed in the central nervous system (CNS) of adults and larvae. In the adult brain, increased levels of expression in the mushroom body (MB) and neurosecretory cells.

The protein localises to the membrane. It is found in the cytoplasm. It localises to the perinuclear region. The protein resides in the golgi apparatus. Its subcellular location is the trans-Golgi network. The protein localises to the secreted. It carries out the reaction Releases C-terminal Arg and Lys from polypeptides.. Inhibited by 2-guanidinoethylmercaptosuccinic acid (GEMSA). Its function is as follows. Metallocarboxypeptidase that catalyzes the release of C-terminal arginine or lysine residues from peptides and proteins. Functionally important for processing a broad range of proteins including growth factors, peptide hormones (such as Akh) and neuropeptides. Consequently, it is involved in a wide range of processes including viability, memory formation, locomotive activity, wing formation, and peptide-regulated behaviors such as starvation-induced hyperactivity, appetitive gustatory preference, and cold and ethanol sensitivity. Key enzyme in neuropeptide processing. Involved in regulation of memory formation, possibly via the insulin pathway in neurosecretory cells. This is Carboxypeptidase D from Drosophila melanogaster (Fruit fly).